The primary structure comprises 23 residues: Malate dehydrogenase (23 aa).

This sequence belongs to the LDH/MDH superfamily. MDH type 2 family.

It catalyses the reaction (S)-malate + NAD(+) = oxaloacetate + NADH + H(+). Its function is as follows. Catalyzes the reversible oxidation of malate to oxaloacetate. The sequence is that of Malate dehydrogenase (mdh) from Thermoleophilum album.